Here is a 388-residue protein sequence, read N- to C-terminus: RNA binding motif protein, X-linked-like-1 (388 aa).

The RRM domain occupies 8 to 86 (GKLFIGGLNT…KAIKVEQATK (79 aa)). The span at 61–80 (DAKDVARDMNGKSLDGKAIK) shows a compositional bias: basic and acidic residues. Positions 61 to 388 (DAKDVARDMN…SDRGGGQKQI (328 aa)) are disordered. Lys80 participates in a covalent cross-link: Glycyl lysine isopeptide (Lys-Gly) (interchain with G-Cter in SUMO2). At Ser88 the chain carries Phosphoserine. Residues 148-161 (RGPPPRSGGPPPKR) are compositionally biased toward pro residues. Composition is skewed to basic and acidic residues over residues 191–212 (PRREPLPSRRDVYLSPRDDGYS) and 238–271 (YTYRDYSHSSSRDDYPSRGYGDRDGYGRDREYSD). The segment covering 320–332 (SRDSYSSSRSDLY) has biased composition (low complexity). Basic and acidic residues-rich tracts occupy residues 333–344 (SSDRDRVGRQER) and 377–388 (SRSDRGGGQKQI).

The protein localises to the nucleus. RNA-binding protein which may be involved in pre-mRNA splicing. This Rattus norvegicus (Rat) protein is RNA binding motif protein, X-linked-like-1 (Rbmxl1).